A 245-amino-acid chain; its full sequence is MTKSPIGGNRSGRKLGQKVKKGKLKASSRRWIERHINDPYVQRAQLEGYRARAAFKLLEIDEKHKILAGAKRIIDLGAAPGSWSQIAAKVTNSTDADPRVAAIDFLEMDPIPGVRFLQMDFLDPEAPENLKQAIGGAPDIVLSDMAAPTTGHRQTDHIRTMHLCEVAAHFAVEVLAEGGHFLAKTFQGGTERDLLNMLKQNFRQVVHVKPASSRAESVEMFLLAKGFKGRHALESDEPAEGAAEE.

Residues 1–25 (MTKSPIGGNRSGRKLGQKVKKGKLK) form a disordered region. Residues 11–25 (SGRKLGQKVKKGKLK) show a composition bias toward basic residues. S-adenosyl-L-methionine contacts are provided by Gly-81, Trp-83, Asp-104, Asp-120, and Asp-144. Lys-184 functions as the Proton acceptor in the catalytic mechanism.

This sequence belongs to the class I-like SAM-binding methyltransferase superfamily. RNA methyltransferase RlmE family.

The protein localises to the cytoplasm. The enzyme catalyses uridine(2552) in 23S rRNA + S-adenosyl-L-methionine = 2'-O-methyluridine(2552) in 23S rRNA + S-adenosyl-L-homocysteine + H(+). Functionally, specifically methylates the uridine in position 2552 of 23S rRNA at the 2'-O position of the ribose in the fully assembled 50S ribosomal subunit. The protein is Ribosomal RNA large subunit methyltransferase E of Rhizobium meliloti (strain 1021) (Ensifer meliloti).